The following is a 432-amino-acid chain: Glutamyl-tRNA reductase (432 aa).

Residues 55–58 (TCNR), S114, 119–121 (ETQ), and Q125 each bind substrate. The active-site Nucleophile is the C56. Position 194–199 (194–199 (GAGEMI)) interacts with NADP(+).

The protein belongs to the glutamyl-tRNA reductase family. Homodimer.

It catalyses the reaction (S)-4-amino-5-oxopentanoate + tRNA(Glu) + NADP(+) = L-glutamyl-tRNA(Glu) + NADPH + H(+). It participates in porphyrin-containing compound metabolism; protoporphyrin-IX biosynthesis; 5-aminolevulinate from L-glutamyl-tRNA(Glu): step 1/2. Catalyzes the NADPH-dependent reduction of glutamyl-tRNA(Glu) to glutamate 1-semialdehyde (GSA). The chain is Glutamyl-tRNA reductase from Burkholderia orbicola (strain AU 1054).